The sequence spans 92 residues: Muconolactone Delta-isomerase (92 aa).

This sequence belongs to the muconolactone Delta-isomerase family. In terms of assembly, homodecamer.

It carries out the reaction (S)-muconolactone = (4,5-dihydro-5-oxofuran-2-yl)-acetate. The protein operates within aromatic compound metabolism; beta-ketoadipate pathway; 5-oxo-4,5-dihydro-2-furylacetate from catechol: step 3/3. The sequence is that of Muconolactone Delta-isomerase (catC) from Cupriavidus pinatubonensis (strain JMP 134 / LMG 1197) (Cupriavidus necator (strain JMP 134)).